The following is a 385-amino-acid chain: Putative nickel insertion protein (385 aa).

This sequence belongs to the LarC family.

This Citrifermentans bemidjiense (strain ATCC BAA-1014 / DSM 16622 / JCM 12645 / Bem) (Geobacter bemidjiensis) protein is Putative nickel insertion protein.